We begin with the raw amino-acid sequence, 236 residues long: Small ribosomal subunit protein eS6 (236 aa).

Residues serine 232 and serine 233 each carry the phosphoserine modification.

Belongs to the eukaryotic ribosomal protein eS6 family. Phosphorylated.

The chain is Small ribosomal subunit protein eS6 (RPS6) from Eremothecium gossypii (strain ATCC 10895 / CBS 109.51 / FGSC 9923 / NRRL Y-1056) (Yeast).